We begin with the raw amino-acid sequence, 539 residues long: Berberine bridge enzyme-like 21 (539 aa).

A signal peptide spans 1–26 (MIATQTFVSVFFFVFFLVSLPFFSSA). C41 and C104 are oxidised to a cystine. N-linked (GlcNAc...) asparagine glycosylation occurs at N79. The region spanning 82 to 256 (STPKPAIIVT…LGYKVKLVPV (175 aa)) is the FAD-binding PCMH-type domain. Residues 119 to 181 (HDYEGLSYIS…KVHGFPAGVC (63 aa)) constitute a cross-link (6-(S-cysteinyl)-8alpha-(pros-histidyl)-FAD (His-Cys)). N-linked (GlcNAc...) asparagine glycosylation occurs at N340.

It belongs to the oxygen-dependent FAD-linked oxidoreductase family. It depends on FAD as a cofactor. The FAD cofactor is bound via a bicovalent 6-S-cysteinyl, 8alpha-N1-histidyl FAD linkage.

It is found in the secreted. Its subcellular location is the cell wall. The polypeptide is Berberine bridge enzyme-like 21 (Arabidopsis thaliana (Mouse-ear cress)).